The primary structure comprises 486 residues: ATP synthase subunit beta (486 aa).

Position 164–171 (G164–T171) interacts with ATP.

It belongs to the ATPase alpha/beta chains family. In terms of assembly, F-type ATPases have 2 components, CF(1) - the catalytic core - and CF(0) - the membrane proton channel. CF(1) has five subunits: alpha(3), beta(3), gamma(1), delta(1), epsilon(1). CF(0) has four main subunits: a(1), b(1), b'(1) and c(9-12).

The protein resides in the cellular thylakoid membrane. It catalyses the reaction ATP + H2O + 4 H(+)(in) = ADP + phosphate + 5 H(+)(out). Its function is as follows. Produces ATP from ADP in the presence of a proton gradient across the membrane. The catalytic sites are hosted primarily by the beta subunits. This chain is ATP synthase subunit beta, found in Prochlorococcus marinus (strain MIT 9312).